The following is a 131-amino-acid chain: Arsenate reductase (131 aa).

Catalysis depends on nucleophile residues Cys-10, Cys-82, and Cys-89. Cystine bridges form between Cys-10–Cys-82 and Cys-82–Cys-89.

It belongs to the low molecular weight phosphotyrosine protein phosphatase family. Thioredoxin-coupled ArsC subfamily.

The protein localises to the cytoplasm. It catalyses the reaction arsenate + [thioredoxin]-dithiol + H(+) = arsenite + [thioredoxin]-disulfide + H2O. Functionally, catalyzes the reduction of arsenate [As(V)] to arsenite [As(III)]. The protein is Arsenate reductase of Staphylococcus aureus (strain N315).